A 291-amino-acid polypeptide reads, in one-letter code: Pyridoxal 5'-phosphate synthase subunit PdxS (291 aa).

Residue Asp-23 participates in D-ribose 5-phosphate binding. Lys-80 acts as the Schiff-base intermediate with D-ribose 5-phosphate in catalysis. Gly-152 lines the D-ribose 5-phosphate pocket. A D-glyceraldehyde 3-phosphate-binding site is contributed by Arg-164. D-ribose 5-phosphate is bound by residues Gly-213 and 234 to 235 (GS).

This sequence belongs to the PdxS/SNZ family. In the presence of PdxT, forms a dodecamer of heterodimers.

It catalyses the reaction aldehydo-D-ribose 5-phosphate + D-glyceraldehyde 3-phosphate + L-glutamine = pyridoxal 5'-phosphate + L-glutamate + phosphate + 3 H2O + H(+). Its pathway is cofactor biosynthesis; pyridoxal 5'-phosphate biosynthesis. In terms of biological role, catalyzes the formation of pyridoxal 5'-phosphate from ribose 5-phosphate (RBP), glyceraldehyde 3-phosphate (G3P) and ammonia. The ammonia is provided by the PdxT subunit. Can also use ribulose 5-phosphate and dihydroxyacetone phosphate as substrates, resulting from enzyme-catalyzed isomerization of RBP and G3P, respectively. The polypeptide is Pyridoxal 5'-phosphate synthase subunit PdxS (Haemophilus influenzae (strain PittGG)).